A 357-amino-acid chain; its full sequence is Probable dual-specificity RNA methyltransferase RlmN (357 aa).

Glutamate 95 acts as the Proton acceptor in catalysis. One can recognise a Radical SAM core domain in the interval 105–343; that stretch reads KKSSYTLCLS…VSIREERGSD (239 aa). A disulfide bridge connects residues cysteine 112 and cysteine 348. [4Fe-4S] cluster-binding residues include cysteine 119, cysteine 123, and cysteine 126. Residues 174–175, serine 206, 229–231, and asparagine 305 each bind S-adenosyl-L-methionine; these read GE and SLH. Cysteine 348 serves as the catalytic S-methylcysteine intermediate.

Belongs to the radical SAM superfamily. RlmN family. The cofactor is [4Fe-4S] cluster.

The protein localises to the cytoplasm. The enzyme catalyses adenosine(2503) in 23S rRNA + 2 reduced [2Fe-2S]-[ferredoxin] + 2 S-adenosyl-L-methionine = 2-methyladenosine(2503) in 23S rRNA + 5'-deoxyadenosine + L-methionine + 2 oxidized [2Fe-2S]-[ferredoxin] + S-adenosyl-L-homocysteine. The catalysed reaction is adenosine(37) in tRNA + 2 reduced [2Fe-2S]-[ferredoxin] + 2 S-adenosyl-L-methionine = 2-methyladenosine(37) in tRNA + 5'-deoxyadenosine + L-methionine + 2 oxidized [2Fe-2S]-[ferredoxin] + S-adenosyl-L-homocysteine. Functionally, specifically methylates position 2 of adenine 2503 in 23S rRNA and position 2 of adenine 37 in tRNAs. The sequence is that of Probable dual-specificity RNA methyltransferase RlmN from Syntrophomonas wolfei subsp. wolfei (strain DSM 2245B / Goettingen).